Reading from the N-terminus, the 427-residue chain is Peptidase B (427 aa).

2 residues coordinate Mn(2+): Lys195 and Asp200. Lys207 is an active-site residue. Mn(2+) is bound by residues Asp218, Asp277, and Glu279. Arg281 is an active-site residue.

It belongs to the peptidase M17 family. As to quaternary structure, homohexamer. It depends on Mn(2+) as a cofactor.

The protein localises to the cytoplasm. It catalyses the reaction Release of an N-terminal amino acid, Xaa, from a peptide or arylamide. Xaa is preferably Glu or Asp but may be other amino acids, including Leu, Met, His, Cys and Gln.. Its function is as follows. Probably plays an important role in intracellular peptide degradation. The chain is Peptidase B from Escherichia fergusonii (strain ATCC 35469 / DSM 13698 / CCUG 18766 / IAM 14443 / JCM 21226 / LMG 7866 / NBRC 102419 / NCTC 12128 / CDC 0568-73).